The following is a 610-amino-acid chain: tRNA uridine 5-carboxymethylaminomethyl modification enzyme MnmG (610 aa).

14 to 19 (GAGHAG) contributes to the FAD binding site. Position 274–288 (274–288 (GPRYCPSIEDKIVKF)) interacts with NAD(+).

It belongs to the MnmG family. Homodimer. Heterotetramer of two MnmE and two MnmG subunits. It depends on FAD as a cofactor.

The protein localises to the cytoplasm. NAD-binding protein involved in the addition of a carboxymethylaminomethyl (cmnm) group at the wobble position (U34) of certain tRNAs, forming tRNA-cmnm(5)s(2)U34. In Chlamydia trachomatis serovar D (strain ATCC VR-885 / DSM 19411 / UW-3/Cx), this protein is tRNA uridine 5-carboxymethylaminomethyl modification enzyme MnmG.